A 98-amino-acid chain; its full sequence is Integration host factor subunit alpha (98 aa).

The disordered stretch occupies residues 49–70 (FGNFDLRDKNQRPGRNPKTGED).

This sequence belongs to the bacterial histone-like protein family. As to quaternary structure, heterodimer of an alpha and a beta chain.

In terms of biological role, this protein is one of the two subunits of integration host factor, a specific DNA-binding protein that functions in genetic recombination as well as in transcriptional and translational control. This is Integration host factor subunit alpha from Yersinia pestis.